A 1020-amino-acid polypeptide reads, in one-letter code: Sodium/potassium-transporting ATPase subunit alpha-2 (1020 aa).

The propeptide occupies 1–5 (MGRGA). Positions 1 to 31 (MGRGAGREYSPAATTAENGGGKKKQKEKELD) are disordered. Residues 6–85 (GREYSPAATT…NALTPPPTTP (80 aa)) are Cytoplasmic-facing. At Ser10 the chain carries Phosphoserine. Residues 80 to 82 (PPP) form an interaction with phosphoinositide-3 kinase region. The chain crosses the membrane as a helical span at residues 86-106 (EWVKFCRQLFGGFSILLWIGA). Residues 107–129 (ILCFLAYGIQAAMEDEPSNDNLY) lie on the Extracellular side of the membrane. A helical transmembrane segment spans residues 130 to 150 (LGVVLAAVVIVTGCFSYYQEA). Over 151–286 (KSSKIMDSFK…VGRTPIAMEI (136 aa)) the chain is Cytoplasmic. Over residues 212 to 227 (DNSSLTGESEPQTRSP) the composition is skewed to polar residues. Residues 212 to 231 (DNSSLTGESEPQTRSPEFTH) form a disordered region. A helical transmembrane segment spans residues 287–306 (EHFIQLITGVAVFPGVSFFV). Residues 307-318 (LSLILGYSWLEA) are Extracellular-facing. A helical membrane pass occupies residues 319-336 (VIFLIGIIVANVPEGLLA). The Cytoplasmic segment spans residues 337-769 (TVTVCLTLTA…EEGRLVFDNL (433 aa)). The active-site 4-aspartylphosphate intermediate is Asp374. Residues Ser439, Ser450, Ser496, and Ser559 each carry the phosphoserine modification. The residue at position 570 (Thr570) is a Phosphothreonine. Phosphoserine occurs at positions 587 and 672. 2 residues coordinate Mg(2+): Asp714 and Asp718. Residues 770–789 (KKSIAYTLTSNIPEITPFLL) form a helical membrane-spanning segment. Topologically, residues 790-799 (FIIANIPLPL) are extracellular. A helical membrane pass occupies residues 800-820 (GTVTILCIDLGTDMVPAISLA). The Cytoplasmic segment spans residues 821–840 (YEAAESDIMKRQPRNSQTDK). At Ser826 the chain carries Phosphoserine. A helical transmembrane segment spans residues 841-863 (LVNERLISMAYGQIGMIQALGGF). Residues 864-915 (FTYFVILAENGFLPSRLLGIRLDWDDRTMNDLEDSYGQEWTYEQRKVVEFTC) lie on the Extracellular side of the membrane. The helical transmembrane segment at 916–935 (HTAFFASIVVVQWADLIICK) threads the bilayer. The Cytoplasmic portion of the chain corresponds to 936–948 (TRRNSVFQQGMKN). Ser940 carries the post-translational modification Phosphoserine; by PKA. A helical membrane pass occupies residues 949–967 (KILIFGLLEETALAAFLSY). The Extracellular portion of the chain corresponds to 968-982 (CPGMGVALRMYPLKV). Residues 983 to 1003 (TWWFCAFPYSLLIFIYDEVRK) traverse the membrane as a helical segment. Residues 1004 to 1020 (LILRRYPGGWVEKETYY) lie on the Cytoplasmic side of the membrane.

This sequence belongs to the cation transport ATPase (P-type) (TC 3.A.3) family. Type IIC subfamily. In terms of assembly, the sodium/potassium-transporting ATPase is composed of a catalytic alpha subunit, an auxiliary non-catalytic beta subunit and an additional regulatory subunit. Interacts with regulatory subunit FXYD1.

Its subcellular location is the membrane. The protein resides in the cell membrane. It catalyses the reaction K(+)(out) + Na(+)(in) + ATP + H2O = K(+)(in) + Na(+)(out) + ADP + phosphate + H(+). This is the catalytic component of the active enzyme, which catalyzes the hydrolysis of ATP coupled with the exchange of sodium and potassium ions across the plasma membrane. This action creates the electrochemical gradient of sodium and potassium, providing the energy for active transport of various nutrients. The protein is Sodium/potassium-transporting ATPase subunit alpha-2 (ATP1A2) of Pongo abelii (Sumatran orangutan).